The sequence spans 306 residues: Putative HTH-type transcriptional regulatory protein Mhun_2548 (306 aa).

Residues 132–189 (LRELRETRSLSLGDLGQILGVSRRTVAKYEAGMGTTIEIALRIEETFDSGVIEPIDLI) enclose the HTH cro/C1-type domain. The segment at residues 143 to 162 (LGDLGQILGVSRRTVAKYEA) is a DNA-binding region (H-T-H motif).

The sequence is that of Putative HTH-type transcriptional regulatory protein Mhun_2548 from Methanospirillum hungatei JF-1 (strain ATCC 27890 / DSM 864 / NBRC 100397 / JF-1).